The primary structure comprises 258 residues: MKRIVCLALFLSMTGCTTLEPIETPAQENATTVVDAVEGDKAAQESSGIIDTLRDRTDPIAGDPAWAPINPKKKQEHYAAATGSLFNANHIGSMYDDSKPRGIGDIITVALDENTRATKKANADMSKSNDASMEPLAVGGENLELGKYNFSYDLSNTNTFAGDASANQSNSISGYITVEVIEVLANGNLVVRGEKWMTLNTGDEYIRLSGTIRPDDIDFENTIASNRVSNARIQYSGTGVQKDMQEPGFLARFFNVSL.

The signal sequence occupies residues 1 to 15 (MKRIVCLALFLSMTG). Cys16 carries the N-palmitoyl cysteine lipid modification. Cys16 carries the S-diacylglycerol cysteine lipid modification.

It belongs to the FlgH family. The basal body constitutes a major portion of the flagellar organelle and consists of four rings (L,P,S, and M) mounted on a central rod.

It is found in the cell outer membrane. The protein resides in the bacterial flagellum basal body. Assembles around the rod to form the L-ring and probably protects the motor/basal body from shearing forces during rotation. This chain is Flagellar L-ring protein, found in Vibrio atlanticus (strain LGP32) (Vibrio splendidus (strain Mel32)).